A 578-amino-acid polypeptide reads, in one-letter code: MITQEEKLAALGKTCLTLKQEKKLAQAVALIDSELPTEALTSLAMLKKAEFLHDVNETERAYALYETLIAQNNDEARYEYARRLYNTGLAKDAQLILKKVSNGVQKKYNNYLGKINKICDLLERLEGKAIPVGTNTCIIAMKHAILFYRNRQPRQLPVGSFGRLALCTGSLGSGGAERQISRLAIEIARKYRQKGKIGGLKVEEPVELIIRSLTPELRQDFFLKEVLEEQVEVLEIAKITGNLFDDATIESPELRLLLSHLPPVCKYGIKHLVPHLCERKLDYLSVWQDSACLMIALAALIAGVPRIQLGLRGLPPVVRKRLFKPEYEPLYQALAVVPGVDFMSNNHCVTRHYADWLKLEAKHFQVVYNGVLPPSTEPSSEVPHKIWQQFTQKTQDADTTIGGVFRFVGDKNPFAWIDFAARYLQHHPATRFVLVGDGDLRAEAQKRAEQLGILERILFVGASRDVGYWLQKMNVFILFSRYEGLPNVLIEAQMVGVPVISTPAGGSAECFIEGVSGFILDDAQTVNLDQACRYAEKLVNLWRSRTGICQQTQSFLQERFTVEHMVGTFVKTIASQPR.

The protein operates within glycan metabolism; Vi-antigen biosynthesis. It functions in the pathway capsule biogenesis; capsule polysaccharide biosynthesis. The sequence is that of Vi polysaccharide biosynthesis protein VipC/TviE (vipC) from Salmonella typhi.